Reading from the N-terminus, the 89-residue chain is Small ribosomal subunit protein uS15 (89 aa).

Belongs to the universal ribosomal protein uS15 family. Part of the 30S ribosomal subunit. Forms a bridge to the 50S subunit in the 70S ribosome, contacting the 23S rRNA.

Its function is as follows. One of the primary rRNA binding proteins, it binds directly to 16S rRNA where it helps nucleate assembly of the platform of the 30S subunit by binding and bridging several RNA helices of the 16S rRNA. Functionally, forms an intersubunit bridge (bridge B4) with the 23S rRNA of the 50S subunit in the ribosome. The protein is Small ribosomal subunit protein uS15 of Magnetococcus marinus (strain ATCC BAA-1437 / JCM 17883 / MC-1).